The primary structure comprises 434 residues: 26S proteasome regulatory subunit 6A (434 aa).

Residue alanine 2 is modified to N-acetylalanine. Phosphotyrosine is present on tyrosine 180. 222–229 (GPPGTGKT) contacts ATP.

It belongs to the AAA ATPase family. In terms of processing, N-acetylated by NAT1.

It is found in the cytoplasm. Its subcellular location is the nucleus. The 26S proteasome is involved in the ATP-dependent degradation of ubiquitinated proteins. The regulatory (or ATPase) complex confers ATP dependency and substrate specificity to the 26S complex. This is 26S proteasome regulatory subunit 6A (RPT5) from Saccharomyces cerevisiae (strain ATCC 204508 / S288c) (Baker's yeast).